We begin with the raw amino-acid sequence, 136 residues long: MAEVKEYKQLNGLALAYMGDAVYEKFIREYLLAAGKTKPNQLHKTATKFVSAKGQAVALKAMIAEGFLTEEEDRIAKRGRNAKSYTVPKNTDPGTYSMSTSFEAVLGYLYLAGEMERLQEWMEKALEIVEKGVETN.

Residue aspartate 20 is part of the active site.

Belongs to the MrnC RNase family. As to quaternary structure, homodimer. Mg(2+) is required as a cofactor.

It localises to the cytoplasm. In terms of biological role, involved in correct processing of both the 5' and 3' ends of 23S rRNA precursor. Processes 30S rRNA precursor transcript even in absence of ribonuclease 3 (Rnc); Rnc processes 30S rRNA into smaller rRNA precursors. The sequence is that of Mini-ribonuclease 3 from Listeria monocytogenes serovar 1/2a (strain ATCC BAA-679 / EGD-e).